An 841-amino-acid chain; its full sequence is Serine/threonine-protein kinase/endoribonuclease IRE1a (841 aa).

A signal peptide spans 1–30; it reads MPPRCPFLRHLFFLLLLLSPWIMSPCGGAA. Topologically, residues 31–323 are lumenal; sequence DDVTYPIVPS…KQKYTYLFGQ (293 aa). N-linked (GlcNAc...) asparagine glycans are attached at residues Asn100, Asn104, Asn119, Asn132, and Asn221. The chain crosses the membrane as a helical span at residues 324–344; that stretch reads WSPVKLLAPLVLLGVVVSVFI. The Cytoplasmic segment spans residues 345–841; the sequence is KKFSSRGSDV…FRKYFKCDII (497 aa). Positions 352–382 are disordered; it reads SDVSLKAGPSKKKKNRKSAKDTNRQSVPRGQ. The Protein kinase domain occupies 414–704; the sequence is FLSSKEIAKG…ATEVLLHPMF (291 aa). ATP-binding positions include 420–428 and Lys442; that span reads IAKGSNGTV. The active-site Proton acceptor is the Asp570. In terms of domain architecture, KEN spans 707–838; that stretch reads SEMRLSFLRD…EEVFRKYFKC (132 aa).

This sequence belongs to the protein kinase superfamily. Ser/Thr protein kinase family. As to quaternary structure, homodimer; disulfide-linked. Dimer formation is driven by hydrophobic interactions within the N-terminal luminal domains and stabilized by disulfide bridges. Mg(2+) serves as cofactor. Post-translationally, autophosphorylated. Ubiquitous. Detected in the vascular bundles of young plants, leaves, roots, seedlings and in the receptacles of flowers and vascular bundles of the petals.

Its subcellular location is the endoplasmic reticulum membrane. It catalyses the reaction L-seryl-[protein] + ATP = O-phospho-L-seryl-[protein] + ADP + H(+). The enzyme catalyses L-threonyl-[protein] + ATP = O-phospho-L-threonyl-[protein] + ADP + H(+). With respect to regulation, the kinase domain is activated by trans-autophosphorylation. Kinase activity is required for activation of the endoribonuclease domain. Senses unfolded proteins in the lumen of the endoplasmic reticulum via its N-terminal domain which leads to enzyme auto-activation. The active endoribonuclease domain splices bZIP60 mRNA to generate a new C-terminus, converting it into a potent unfolded-protein response transcriptional activator which then induces transcription of UPR target genes. Involved in organ growth regulation. Plays a role in plant immunity and abiotic stress responses. This chain is Serine/threonine-protein kinase/endoribonuclease IRE1a (IRE1A), found in Arabidopsis thaliana (Mouse-ear cress).